A 697-amino-acid chain; its full sequence is Histone deacetylase HOS3 (697 aa).

The segment at 40–440 (AKAVVVLSPY…LIGLQNQDWV (401 aa)) is histone deacetylase. The active site involves histidine 196. A disordered region spans residues 525–573 (IRSHRSNASPEKELHENKPRSTEKQEQREIRSDTKVKQLSSNNRAAETQ). Over residues 534–560 (PEKELHENKPRSTEKQEQREIRSDTKV) the composition is skewed to basic and acidic residues. Residues 561–573 (KQLSSNNRAAETQ) show a composition bias toward polar residues. Serine 582, serine 583, serine 613, and serine 629 each carry phosphoserine. A compositionally biased stretch (basic and acidic residues) spans 625–638 (GDEDSDHELKEKNW). Residues 625-697 (GDEDSDHELK…KHTTRSGGRW (73 aa)) form a disordered region. Residues 665–674 (QPQNANTPTY) show a composition bias toward polar residues.

This sequence belongs to the histone deacetylase family. HD type 1 subfamily. Homodimer.

It is found in the nucleus. It carries out the reaction N(6)-acetyl-L-lysyl-[histone] + H2O = L-lysyl-[histone] + acetate. In terms of biological role, responsible for the deacetylation of lysine residues on the N-terminal part of the core histones (H2A, H2B, H3 and H4). Histone deacetylation gives a tag for epigenetic repression and plays an important role in transcriptional regulation, cell cycle progression and developmental events. Histone deacetylases act via the formation of large multiprotein complexes. The protein is Histone deacetylase HOS3 (HOS3) of Saccharomyces cerevisiae (strain ATCC 204508 / S288c) (Baker's yeast).